The following is a 306-amino-acid chain: D-alanine--D-alanine ligase (306 aa).

One can recognise an ATP-grasp domain in the interval 101 to 303; it reads KLVWQALGLP…FSQLVARILM (203 aa). An ATP-binding site is contributed by 134–189; that stretch reads VAKLGLPLIVKPSHEGSSVGMSKVDHASELQKALVEAFQHDSDVLIEKWLSGPEFT. Mg(2+)-binding residues include aspartate 257, glutamate 270, and asparagine 272.

The protein belongs to the D-alanine--D-alanine ligase family. Mg(2+) serves as cofactor. The cofactor is Mn(2+).

It localises to the cytoplasm. It catalyses the reaction 2 D-alanine + ATP = D-alanyl-D-alanine + ADP + phosphate + H(+). Its pathway is cell wall biogenesis; peptidoglycan biosynthesis. Cell wall formation. The protein is D-alanine--D-alanine ligase of Yersinia pseudotuberculosis serotype O:1b (strain IP 31758).